A 187-amino-acid chain; its full sequence is 1,6-anhydro-N-acetylmuramyl-L-alanine amidase AmpD (187 aa).

The N-acetylmuramoyl-L-alanine amidase domain maps to 29-167 (SLLVVHNISL…APDRKTDPGP (139 aa)). A Zn(2+)-binding site is contributed by His34. Residue Glu116 is the Proton acceptor of the active site. 2 residues coordinate Zn(2+): His154 and Asp164.

Belongs to the N-acetylmuramoyl-L-alanine amidase 2 family. The cofactor is Zn(2+).

It localises to the cytoplasm. It catalyses the reaction Hydrolyzes the link between N-acetylmuramoyl residues and L-amino acid residues in certain cell-wall glycopeptides.. Its function is as follows. Involved in cell wall peptidoglycan recycling. Specifically cleaves the amide bond between the lactyl group of N-acetylmuramic acid and the alpha-amino group of the L-alanine in degradation products containing an anhydro N-acetylmuramyl moiety. This Salmonella typhimurium (strain SL1344) protein is 1,6-anhydro-N-acetylmuramyl-L-alanine amidase AmpD (ampD).